Here is a 476-residue protein sequence, read N- to C-terminus: Cytochrome P450 monooxygenase ppzE (476 aa).

Cys452 serves as a coordination point for heme.

It belongs to the cytochrome P450 family. Heme is required as a cofactor.

Its pathway is secondary metabolite biosynthesis. In terms of biological role, cytochrome P450 monooxygenase; part of the gene cluster that mediates the biosynthesis of pyrrolopyrazines, secondary metabolites showing insecticidal activity. The role of ppzE within the pathway has still to be determined. The single multifunctional NRPS ppzA is sufficient to produce peramine via condensation of 1-pyrroline-5-carboxylate and arginine, N-methylation of the alpha-amino group of arginine and reduction of the thioester and the cyclization to form an iminium ion resulting in release from the peptide synthetase. Deprotonation of this intermediate and oxidation of the pyrroline ring would give rise to peramine. In Epichloe species that produce only peramine, the peramine synthetase gene is not localized in a gene cluster, in contrast to Metarhizium species that contain additional pyrrolopyrazine biosynthesis genes. The 2-oxoglutarate-Fe(II) type oxidoreductase ppzC hydroxylates peramine to yield the newly identified compound 8-hydroxyperamine whereas ppzD converts L-proline into trans-4-hydroxy-L-proline, a precursor of peramine biosynthesis. This Metarhizium majus (strain ARSEF 297) protein is Cytochrome P450 monooxygenase ppzE.